The chain runs to 388 residues: Phosphoribosylformylglycinamidine cyclo-ligase, chloroplastic/mitochondrial (388 aa).

The protein belongs to the AIR synthase family.

Its subcellular location is the plastid. The protein resides in the chloroplast. It is found in the mitochondrion. The catalysed reaction is 2-formamido-N(1)-(5-O-phospho-beta-D-ribosyl)acetamidine + ATP = 5-amino-1-(5-phospho-beta-D-ribosyl)imidazole + ADP + phosphate + H(+). It functions in the pathway purine metabolism; IMP biosynthesis via de novo pathway; 5-amino-1-(5-phospho-D-ribosyl)imidazole from N(2)-formyl-N(1)-(5-phospho-D-ribosyl)glycinamide: step 2/2. This is Phosphoribosylformylglycinamidine cyclo-ligase, chloroplastic/mitochondrial (PUR5) from Vigna unguiculata (Cowpea).